The sequence spans 618 residues: 1-deoxy-D-xylulose-5-phosphate synthase (618 aa).

Thiamine diphosphate-binding positions include His-77 and 118 to 120; that span reads GHS. Asp-149 is a binding site for Mg(2+). Residues 150-151, Asn-178, Tyr-285, and Glu-367 each bind thiamine diphosphate; that span reads GA. Asn-178 provides a ligand contact to Mg(2+).

Belongs to the transketolase family. DXPS subfamily. Homodimer. Mg(2+) is required as a cofactor. Requires thiamine diphosphate as cofactor.

The catalysed reaction is D-glyceraldehyde 3-phosphate + pyruvate + H(+) = 1-deoxy-D-xylulose 5-phosphate + CO2. Its pathway is metabolic intermediate biosynthesis; 1-deoxy-D-xylulose 5-phosphate biosynthesis; 1-deoxy-D-xylulose 5-phosphate from D-glyceraldehyde 3-phosphate and pyruvate: step 1/1. Its function is as follows. Catalyzes the acyloin condensation reaction between C atoms 2 and 3 of pyruvate and glyceraldehyde 3-phosphate to yield 1-deoxy-D-xylulose-5-phosphate (DXP). This chain is 1-deoxy-D-xylulose-5-phosphate synthase, found in Idiomarina loihiensis (strain ATCC BAA-735 / DSM 15497 / L2-TR).